Consider the following 853-residue polypeptide: E3 ubiquitin-protein ligase ZNRF3 (853 aa).

A signal peptide spans 1-28 (MKEPRIRGGLPLVWLWVLLAVAPGESLA). The Extracellular segment spans residues 29 to 192 (KETAFVEVVL…PRQPTEYFDM (164 aa)). The chain crosses the membrane as a helical span at residues 193 to 213 (GIFLAFFVVVSLVCLILLIKI). The Cytoplasmic segment spans residues 214–853 (KLKQRRSQNS…GQDCHPTDRD (640 aa)). The segment at 266–307 (CAICLEKYIDGEELRVIPCTHRFHKRCVDPWLLQNHTCPHCR) adopts an RING-type; atypical zinc-finger fold. Disordered stretches follow at residues 583–629 (SRSP…RLSS), 650–673 (SSGTVPDASVSISQGGGKDRRGPE), 685–713 (GDPSSDCTNLYLGPDPHQTSGPSSSGGLY), and 834–853 (TGKEGAGSTTGQDCHPTDRD). Residues 589–607 (TGGGDAPGCGGEGGTGSGR) show a composition bias toward gly residues. Residues 615–629 (HQTFPNSPSRDRLSS) show a composition bias toward polar residues.

This sequence belongs to the ZNRF3 family.

It localises to the cell membrane. The enzyme catalyses S-ubiquitinyl-[E2 ubiquitin-conjugating enzyme]-L-cysteine + [acceptor protein]-L-lysine = [E2 ubiquitin-conjugating enzyme]-L-cysteine + N(6)-ubiquitinyl-[acceptor protein]-L-lysine.. It functions in the pathway protein modification; protein ubiquitination. Functionally, E3 ubiquitin-protein ligase that acts as a negative regulator of the Wnt signaling pathway by mediating the ubiquitination and subsequent degradation of Wnt receptor complex components. Along with RSPO2 and RNF43, constitutes a master switch that governs limb specification. The chain is E3 ubiquitin-protein ligase ZNRF3 (znrf3) from Xenopus tropicalis (Western clawed frog).